Here is a 173-residue protein sequence, read N- to C-terminus: SPbeta prophage-derived putative HNH homing endonuclease YosQ (173 aa).

A possible homing endonuclease, it is entirely encoded within the YosP intron. This chain is SPbeta prophage-derived putative HNH homing endonuclease YosQ (yosQ), found in Bacillus subtilis (strain 168).